The primary structure comprises 90 residues: DNA-directed RNA polymerase subunit omega (90 aa).

It belongs to the RNA polymerase subunit omega family. The RNAP catalytic core consists of 2 alpha, 1 beta, 1 beta' and 1 omega subunit. When a sigma factor is associated with the core the holoenzyme is formed, which can initiate transcription.

It catalyses the reaction RNA(n) + a ribonucleoside 5'-triphosphate = RNA(n+1) + diphosphate. In terms of biological role, promotes RNA polymerase assembly. Latches the N- and C-terminal regions of the beta' subunit thereby facilitating its interaction with the beta and alpha subunits. In Hamiltonella defensa subsp. Acyrthosiphon pisum (strain 5AT), this protein is DNA-directed RNA polymerase subunit omega.